Reading from the N-terminus, the 162-residue chain is Flagellar assembly factor FliW (162 aa).

Belongs to the FliW family. In terms of assembly, interacts with translational regulator CsrA and flagellin(s).

It localises to the cytoplasm. Its function is as follows. Acts as an anti-CsrA protein, binds CsrA and prevents it from repressing translation of its target genes, one of which is flagellin. Binds to flagellin and participates in the assembly of the flagellum. The sequence is that of Flagellar assembly factor FliW from Magnetococcus marinus (strain ATCC BAA-1437 / JCM 17883 / MC-1).